Here is a 506-residue protein sequence, read N- to C-terminus: MPANGTSPQRFPALIPGEPGRSFEGSVSFEDVAVDFTRQEWHRLDPAQRTMHKDVMLETYSNLASVGLCVAKPEMIFKLERGEELWILEEESSGHGYSGSLSLLCGNGSVGDNALRHDNDLLHHQKIQTLDQNVEYNGCRKAFHEKTGFVRRKRTPRGDKNFECHECGKAYCRKSNLVEHLRIHTGERPYECGECAKTFSARSYLIAHQKTHTGERPFECNECGKSFGRKSQLILHTRTHTGERPYECTECGKTFSEKATLTIHQRTHTGEKPYECSECGKTFRVKISLTQHHRTHTGEKPYECGECGKNFRAKKSLNQHQRIHTGEKPYECGECGKFFRMKMTLNNHQRTHTGEKPYQCNECGKSFRVHSSLGIHQRIHTGEKPYECNECGNAFYVKARLIEHQRMHSGEKPYECSECGKIFSMKKSLCQHRRTHTGEKPYECSECGNAFYVKVRLIEHQRIHTGERPFECQECGKAFCRKAHLTEHQRTHIGWSWRCTMKKASH.

The 72-residue stretch at 27-98 (VSFEDVAVDF…EEESSGHGYS (72 aa)) folds into the KRAB domain. C2H2-type zinc fingers lie at residues 162–184 (FECHECGKAYCRKSNLVEHLRIH), 190–212 (YECGECAKTFSARSYLIAHQKTH), 218–240 (FECNECGKSFGRKSQLILHTRTH), 246–268 (YECTECGKTFSEKATLTIHQRTH), 274–296 (YECSECGKTFRVKISLTQHHRTH), 302–324 (YECGECGKNFRAKKSLNQHQRIH), 330–352 (YECGECGKFFRMKMTLNNHQRTH), 358–380 (YQCNECGKSFRVHSSLGIHQRIH), 386–408 (YECNECGNAFYVKARLIEHQRMH), 414–436 (YECSECGKIFSMKKSLCQHRRTH), 442–464 (YECSECGNAFYVKVRLIEHQRIH), and 470–492 (FECQECGKAFCRKAHLTEHQRTH).

This sequence belongs to the krueppel C2H2-type zinc-finger protein family.

Its subcellular location is the nucleus. In terms of biological role, may be involved in transcriptional regulation. This Homo sapiens (Human) protein is Zinc finger protein 157 (ZNF157).